The chain runs to 99 residues: Protein dpy-30 homolog (99 aa).

The residue at position 1 (M1) is an N-acetylmethionine. The interval 1–26 (MESEQMLEGQTQVAENPHSEYGLTDS) is disordered. S19 carries the phosphoserine modification. An N6-acetyllysine; alternate modification is found at K35. K35 participates in a covalent cross-link: Glycyl lysine isopeptide (Lys-Gly) (interchain with G-Cter in SUMO2); alternate.

Belongs to the dpy-30 family. Homodimer. Core component of several methyltransferase-containing complexes including MLL1/MLL, MLL2/3 (also named ASCOM complex) and MLL4/WBP7. Each complex is at least composed of ASH2L, RBBP5, WDR5, DPY30, one or more specific histone methyltransferases (KMT2A/MLL1, KMT2D/MLL2, KMT2C/MLL3 and KMT2B/MLL4), and the facultative components MEN1, HCFC1, HCFC2, NCOA6, KDM6A, PAXIP1/PTIP, PAGR1 and alpha- and beta-tubulin PAXIP1/PTIP, PAGR1 and alpha- and beta-tubulin. Interacts with ASH2L. The interaction with ASH2L is direct. Interacts with ARFGEF1. Component of the SET1 complex, at least composed of the catalytic subunit (SETD1A or SETD1B), WDR5, WDR82, RBBP5, ASH2L/ASH2, CXXC1/CFP1, HCFC1 and DPY30.

It localises to the nucleus. The protein resides in the golgi apparatus. The protein localises to the trans-Golgi network. Its function is as follows. As part of the MLL1/MLL complex, involved in the methylation of histone H3 at 'Lys-4', particularly trimethylation. Histone H3 'Lys-4' methylation represents a specific tag for epigenetic transcriptional activation. May play some role in histone H3 acetylation. In embryonic stem (ES) cells, plays a crucial role in the differentiation potential, particularly along the neural lineage, regulating gene induction and histone H3 'Lys-4' methylation at key developmental loci, including that mediated by retinoic acid. Does not affect ES cell self-renewal. May also play an indirect or direct role in endosomal transport. This is Protein dpy-30 homolog (Dpy30) from Mus musculus (Mouse).